Reading from the N-terminus, the 145-residue chain is 3-hydroxyacyl-[acyl-carrier-protein] dehydratase FabZ (145 aa).

H48 is an active-site residue.

This sequence belongs to the thioester dehydratase family. FabZ subfamily.

It is found in the cytoplasm. It catalyses the reaction a (3R)-hydroxyacyl-[ACP] = a (2E)-enoyl-[ACP] + H2O. Its function is as follows. Involved in unsaturated fatty acids biosynthesis. Catalyzes the dehydration of short chain beta-hydroxyacyl-ACPs and long chain saturated and unsaturated beta-hydroxyacyl-ACPs. The protein is 3-hydroxyacyl-[acyl-carrier-protein] dehydratase FabZ of Cellvibrio japonicus (strain Ueda107) (Pseudomonas fluorescens subsp. cellulosa).